Here is a 485-residue protein sequence, read N- to C-terminus: ATP synthase subunit beta 1 (485 aa).

ATP is bound at residue 157–164; sequence GGAGVGKT.

The protein belongs to the ATPase alpha/beta chains family. As to quaternary structure, F-type ATPases have 2 components, CF(1) - the catalytic core - and CF(0) - the membrane proton channel. CF(1) has five subunits: alpha(3), beta(3), gamma(1), delta(1), epsilon(1). CF(0) has three main subunits: a(1), b(2) and c(9-12). The alpha and beta chains form an alternating ring which encloses part of the gamma chain. CF(1) is attached to CF(0) by a central stalk formed by the gamma and epsilon chains, while a peripheral stalk is formed by the delta and b chains.

The protein localises to the cell inner membrane. It carries out the reaction ATP + H2O + 4 H(+)(in) = ADP + phosphate + 5 H(+)(out). Its function is as follows. Produces ATP from ADP in the presence of a proton gradient across the membrane. The catalytic sites are hosted primarily by the beta subunits. The polypeptide is ATP synthase subunit beta 1 (Psychromonas ingrahamii (strain DSM 17664 / CCUG 51855 / 37)).